The primary structure comprises 105 residues: MHGKVPTLQDVVLELTPQTEIDLQCNEQLDSSEDEDEDEVDHLQERPQQARQAKQHTCYLIHVPCCECKFVVQLDIQSTKEDLRVVQQLLMGALTVTCPLCASSN.

Positions 1–45 (MHGKVPTLQDVVLELTPQTEIDLQCNEQLDSSEDEDEDEVDHLQE) are E7 terminal domain. The LXCXE motif; interaction with host RB1 and TMEM173/STING signature appears at 23–27 (LQCNE). Residues 29–48 (LDSSEDEDEDEVDHLQERPQ) are disordered. Residues 30–40 (DSSEDEDEDEV) show a composition bias toward acidic residues. The segment at 65–101 (CCECKFVVQLDIQSTKEDLRVVQQLLMGALTVTCPLC) is a zinc-finger region. A Nuclear export signal motif is present at residues 83-91 (LRVVQQLLM).

Belongs to the papillomaviridae E7 protein family. Homodimer. Homooligomer. Interacts with host RB1; this interaction induces dissociation of RB1-E2F1 complex thereby disrupting RB1 activity. Interacts with host EP300; this interaction represses EP300 transcriptional activity. Interacts with protein E2; this interaction inhibits E7 oncogenic activity. Interacts with host TMEM173/STING; this interaction impairs the ability of TMEM173/STING to sense cytosolic DNA and promote the production of type I interferon (IFN-alpha and IFN-beta). In terms of processing, highly phosphorylated.

It is found in the host cytoplasm. The protein resides in the host nucleus. Plays a role in viral genome replication by driving entry of quiescent cells into the cell cycle. Stimulation of progression from G1 to S phase allows the virus to efficiently use the cellular DNA replicating machinery to achieve viral genome replication. E7 protein has both transforming and trans-activating activities. Induces the disassembly of the E2F1 transcription factor from RB1, with subsequent transcriptional activation of E2F1-regulated S-phase genes. Interferes with host histone deacetylation mediated by HDAC1 and HDAC2, leading to transcription activation. Also plays a role in the inhibition of both antiviral and antiproliferative functions of host interferon alpha. Interaction with host TMEM173/STING impairs the ability of TMEM173/STING to sense cytosolic DNA and promote the production of type I interferon (IFN-alpha and IFN-beta). This chain is Protein E7, found in Human papillomavirus 56.